The chain runs to 363 residues: Type-2 angiotensin II receptor (363 aa).

Residues 1 to 45 (MKDNFSFAATSRNITSSLPFVNLNMSGTNDLIFNCSHKPSDKHLE) are Extracellular-facing. N-linked (GlcNAc...) asparagine glycans are attached at residues asparagine 4, asparagine 13, asparagine 24, and asparagine 34. Disulfide bonds link cysteine 35-cysteine 290 and cysteine 117-cysteine 195. Residues 46-70 (AIPVLYYLIFVIGFAVNIIVVSLFC) traverse the membrane as a helical segment. Residues 71-80 (CQKGPKKVSS) are Cytoplasmic-facing. A helical transmembrane segment spans residues 81-104 (IYIFNLAVADLLLLATLPLWATYY). Angiotensin II-binding residues include tyrosine 103 and tyrosine 104. Topologically, residues 105-114 (SYRYDWLFGP) are extracellular. A helical transmembrane segment spans residues 115–140 (VMCKVFGSFLTLNMFASIFFITCMSV). At 141–159 (DRYQSVIYPFLSQRRNPWQ) the chain is on the cytoplasmic side. A helical membrane pass occupies residues 160-181 (ASYVVPLVWCMACLSSLPTFYF). Angiotensin II-binding residues include arginine 182, tyrosine 204, and lysine 215. Residues 182-206 (RDVRTIEYLGVNACVMAFPPEKYAQ) are Extracellular-facing. A helical membrane pass occupies residues 207–232 (WSAGIALMKNVLGFIIPLIFIATCYF). The Cytoplasmic portion of the chain corresponds to 233-257 (GIRKHLLKTNSYGKNRITRDQVLKM). Residues 258–281 (AAAVVLAFIICWLPFHVLTFLDAL) traverse the membrane as a helical segment. Aspartate 279 provides a ligand contact to angiotensin II. Residues 282-294 (SWMGIINSCEVMA) are Extracellular-facing. The chain crosses the membrane as a helical span at residues 295–320 (VIDLALPFAILLGFTNSCVNPFLYCF). Aspartate 297 provides a ligand contact to angiotensin II. Over 321-363 (VGNRFQQKLRSMFRVPITWLQGKRETMSCRKSSSLREMDTFVS) the chain is Cytoplasmic. The interval 324 to 333 (RFQQKLRSMF) is helix VIII. Serine 354 carries the post-translational modification Phosphoserine; by PKC.

The protein belongs to the G-protein coupled receptor 1 family. As to quaternary structure, interacts with MTUS1.

It localises to the cell membrane. In terms of biological role, receptor for angiotensin II, a vasoconstricting peptide. Signals primarily via a non-canonical G-protein- and beta-arrestin independent pathways. Cooperates with MTUS1 to inhibit ERK2 activation and cell proliferation. The protein is Type-2 angiotensin II receptor (AGTR2) of Meriones unguiculatus (Mongolian jird).